We begin with the raw amino-acid sequence, 342 residues long: Ribosomal RNA small subunit methyltransferase H (342 aa).

S-adenosyl-L-methionine-binding positions include 62 to 64 (GGH), D82, F108, D129, and Q136. The disordered stretch occupies residues 280–319 (RHSKGQYPEDENLPMPPKRPRYFSKPKRVGPSKAEISHNP). A compositionally biased stretch (basic residues) spans 297-309 (KRPRYFSKPKRVG).

The protein belongs to the methyltransferase superfamily. RsmH family.

The protein localises to the cytoplasm. It catalyses the reaction cytidine(1402) in 16S rRNA + S-adenosyl-L-methionine = N(4)-methylcytidine(1402) in 16S rRNA + S-adenosyl-L-homocysteine + H(+). Functionally, specifically methylates the N4 position of cytidine in position 1402 (C1402) of 16S rRNA. This chain is Ribosomal RNA small subunit methyltransferase H, found in Psychrobacter cryohalolentis (strain ATCC BAA-1226 / DSM 17306 / VKM B-2378 / K5).